Consider the following 121-residue polypeptide: Homeobox protein HD-6 (121 aa).

Positions 28–87 form a DNA-binding region, homeobox; sequence PKRSRIQLHDWQSMLLEHSFRMNPYPDRIEKYNLFLKTKIPMKNVKIWFQNRRAREKSFY.

It localises to the nucleus. The protein is Homeobox protein HD-6 (HD-6) of Encephalitozoon cuniculi (strain GB-M1) (Microsporidian parasite).